Here is an 828-residue protein sequence, read N- to C-terminus: MNLSRRDFMKANAAMAAATAAGLSIPVKNVEAAESEIKWDKAVCRFCGTGCAVLVGTKDGRVVASQGDPDAEVNRGLNCIKGYFLPKIMYGKDRLTQPMLRMKDGKYDKNGDFTPVSWDVAFKTMAEKFKAAVKELGPNGVGMFSSGQTTIFEGYAKSKLWKAGFRSNNIDPNARHCMASAAVAFMRTFGMDEPMGCYNDIEQAEAFVLWGSNMAEMHPILWSRITDRRLSNQDVKVAVLSTFEHRSFELADYSLIFKPHTDLVILNYIINYLIQNDAINRDFVNKHTKFKRGETDIGYGLRPENPLEQKAKNVKTAGKMYDSNFDELKALVAEYTLDKAHEMSGVPKDVLENLAKLYADPKKKVVSYWTMGFNQHTRGVWANHLIYNIHLLTGKISIPGCGPFSLTGQPSACGTAREVGTFIHRLPADLVVTNPKHREKAEQIWKLPAGVITDVLGFHAVAQSRALKDGKMRVLWQMCTNNMQGGPNINRETFPGWRNPDNFIVVSDPYPTVSCLAADLMLPTAMWVEKEGAYGNAERRTQFWRQQVKAPGEAKSDVWQLVEFSKYFTTDEMWPAEILDKNPEYKGKTLYDVLYRNGQVDKFPLSELAEGQLNDESYHFGFYLQKGLFEEYASFGRGHGHDLASFDTYHKARGLRWPVVDGKETLWRYREGYDPYVKEGEGVAFYGYPDKKAIILAVPYEPPAESPDEEYDLWLCTGRVLEHWHTGTMTRRVPELHRSFPNNLVWMHPTDAQKRGLRHGDKVKVASRRGEIISFLDTRGRNKVPEGLIYTTFFDAGQLANKLTLDATDPISKETDFKKCAVKVEKAA.

Positions Met-1–Ala-32 form a signal peptide, tat-type signal. A 4Fe-4S Mo/W bis-MGD-type domain is found at Ile-37–Asp-93. [4Fe-4S] cluster contacts are provided by Cys-44, Cys-47, Cys-51, and Cys-79. Mo-bis(molybdopterin guanine dinucleotide) contacts are provided by residues Lys-81, Gln-148, Asn-173, Cys-177, Trp-210–Met-217, Ser-241–His-245, Met-371, Gln-375, Asn-481, Ser-507–Asp-508, Lys-530, Asp-557, and Thr-717–Thr-726. Position 793 (Phe-793) interacts with substrate. Mo-bis(molybdopterin guanine dinucleotide) is bound by residues Asn-801 and Lys-818.

It belongs to the prokaryotic molybdopterin-containing oxidoreductase family. NasA/NapA/NarB subfamily. As to quaternary structure, component of the periplasmic nitrate reductase NapAB complex composed of NapA and NapB. [4Fe-4S] cluster is required as a cofactor. Mo-bis(molybdopterin guanine dinucleotide) serves as cofactor. Predicted to be exported by the Tat system. The position of the signal peptide cleavage has not been experimentally proven.

It localises to the periplasm. The catalysed reaction is 2 Fe(II)-[cytochrome] + nitrate + 2 H(+) = 2 Fe(III)-[cytochrome] + nitrite + H2O. Catalytic subunit of the periplasmic nitrate reductase complex NapAB. Receives electrons from NapB and catalyzes the reduction of nitrate to nitrite. The protein is Periplasmic nitrate reductase of Aggregatibacter actinomycetemcomitans (Actinobacillus actinomycetemcomitans).